A 734-amino-acid polypeptide reads, in one-letter code: Photosystem I P700 chlorophyll a apoprotein A2 (734 aa).

8 helical membrane-spanning segments follow: residues 46–69 (IFAS…FHVA), 135–158 (LYSG…LHLQ), 175–199 (LNHH…HVAI), 273–291 (MAHH…GHMY), 330–353 (LHIQ…QHMY), 369–395 (ASLY…IFFV), 417–439 (AIIS…LYVH), and 517–535 (FLVH…LILV). [4Fe-4S] cluster-binding residues include Cys-559 and Cys-568. The next 2 membrane-spanning stretches (helical) occupy residues 575-596 (AFYL…YWHW) and 643-665 (LSVW…MFLI). Residues His-654, Met-662, and Tyr-670 each coordinate chlorophyll a. Trp-671 is a binding site for phylloquinone. The helical transmembrane segment at 707-727 (LVGLAHFSVGYVLTYAAFVLA) threads the bilayer.

Belongs to the PsaA/PsaB family. As to quaternary structure, the PsaA/B heterodimer binds the P700 chlorophyll special pair and subsequent electron acceptors. PSI consists of a core antenna complex that captures photons, and an electron transfer chain that converts photonic excitation into a charge separation. The eukaryotic PSI reaction center is composed of at least 11 subunits. P700 is a chlorophyll a/chlorophyll a' dimer, A0 is one or more chlorophyll a, A1 is one or both phylloquinones and FX is a shared 4Fe-4S iron-sulfur center. is required as a cofactor.

It is found in the plastid. Its subcellular location is the chloroplast thylakoid membrane. It catalyses the reaction reduced [plastocyanin] + hnu + oxidized [2Fe-2S]-[ferredoxin] = oxidized [plastocyanin] + reduced [2Fe-2S]-[ferredoxin]. In terms of biological role, psaA and PsaB bind P700, the primary electron donor of photosystem I (PSI), as well as the electron acceptors A0, A1 and FX. PSI is a plastocyanin/cytochrome c6-ferredoxin oxidoreductase, converting photonic excitation into a charge separation, which transfers an electron from the donor P700 chlorophyll pair to the spectroscopically characterized acceptors A0, A1, FX, FA and FB in turn. Oxidized P700 is reduced on the lumenal side of the thylakoid membrane by plastocyanin or cytochrome c6. This chain is Photosystem I P700 chlorophyll a apoprotein A2, found in Pyropia yezoensis (Susabi-nori).